A 463-amino-acid polypeptide reads, in one-letter code: Probable Xaa-Pro aminopeptidase pepP (463 aa).

Residues Asp-259, Asp-270, Glu-393, and Glu-433 each contribute to the Mn(2+) site.

The protein belongs to the peptidase M24B family. Mn(2+) is required as a cofactor.

The enzyme catalyses Release of any N-terminal amino acid, including proline, that is linked to proline, even from a dipeptide or tripeptide.. Functionally, catalyzes the removal of a penultimate prolyl residue from the N-termini of peptides. The protein is Probable Xaa-Pro aminopeptidase pepP (pepP) of Pyrenophora tritici-repentis (strain Pt-1C-BFP) (Wheat tan spot fungus).